The chain runs to 1287 residues: FYVE zinc finger domain protein UPA1 (1287 aa).

A disordered region spans residues 1–298; the sequence is MTIPDPANII…SSTSLSAPAE (298 aa). The segment covering 86-99 has biased composition (low complexity); it reads DSSSFGSKPSSSAS. The segment covering 115 to 136 has biased composition (polar residues); it reads WATSSTTSHPSKASQSTLSPNA. Positions 128–144 match the PAM2 motif; sequence SQSTLSPNASVFKPSRS. 2 stretches are compositionally biased toward basic and acidic residues: residues 177-187 and 201-211; these read RPDHAPLDHEQ and KVEEQRGDHSI. Polar residues predominate over residues 212–235; that stretch reads PHQNGLVSAQAQTASDAVSTSKYT. A PAM2L 1 motif is present at residues 239 to 253; it reads ADQEEDQDDFVYPGA. Polar residues predominate over residues 255–294; that stretch reads SPSSGQAAVQDEQQAVTDSQTTKSLTKQESDPEASSTSLS. 4 ANK repeats span residues 366-395, 400-429, 433-463, and 468-497; these read NGLV…AIVE, EGET…DANA, DGWT…QIDV, and GAWT…ADPF. 4 disordered regions span residues 582–630, 643–697, 934–960, and 977–1005; these read NGGK…VGLP, RVGP…ASAQ, REAA…YPNS, and TSGT…APSE. Polar residues predominate over residues 674–695; the sequence is STPTPESVLQARRGTSSVNGAS. Over residues 938–955 the composition is skewed to acidic residues; that stretch reads GLDEDEDEDAADDDDDEF. The PAM2L 2 motif lies at 941–960; sequence EDEDEDAADDDDDEFIYPNS. Positions 981-995 are enriched in low complexity; sequence LSRPSLSQRQSSAAS. An FYVE-type zinc finger spans residues 1055–1129; sequence DEEAKDCIGC…VCNGCHAELQ (75 aa). Zn(2+) contacts are provided by cysteine 1061, cysteine 1064, cysteine 1077, cysteine 1080, cysteine 1085, cysteine 1088, cysteine 1121, and cysteine 1124. An RING-type; atypical zinc finger spans residues 1243 to 1283; it reads CSICMEDFVANSTIARLPCLCYFHRGCIDSWFKRGRECPVH.

The protein belongs to the UPA1 PAM2 domain-binding protein family. Part of large ribonucleoprotein complexes (mRNPs) containing RNA-binding proteins RRM4 and PAB1, endosome-binding protein UPA1, core scaffold protein UPA2 and associated factor GRP1. Interacts (via PAM2 motif) with PAB1 (via PABC domain). Interacts (via PAM2L motifs) with RRM4.

Its subcellular location is the cytoplasm. The protein resides in the cytoskeleton. It is found in the endosome. FYVE zinc finger domain protein that functions in endosomal targeting and transport of mRNAs, as well as associated ribosomes. The endosomal mRNA transport regulates polarity of the infectious hyphae by transporting a broad spectrum of cargo mRNAs from the nucleus to cell poles. Involved in chitinase CTS1 secretion. Dispensable for general endosomal functions but crucial for endosomal recruitment of RRM4. The sequence is that of FYVE zinc finger domain protein UPA1 from Mycosarcoma maydis (Corn smut fungus).